Here is a 374-residue protein sequence, read N- to C-terminus: uncharacterized protein (374 aa).

6 residues coordinate a divalent metal cation: D158, H160, D190, N221, H312, and H314.

This sequence belongs to the metallophosphoesterase superfamily. A divalent metal cation is required as a cofactor.

This is an uncharacterized protein from Campylobacter jejuni subsp. jejuni serotype O:2 (strain ATCC 700819 / NCTC 11168).